A 297-amino-acid chain; its full sequence is Glucose-6-phosphate 1-epimerase (297 aa).

Substrate-binding residues include Arg-57, Gln-81, and Arg-86. Ser-88 is subject to Phosphoserine. His-159 is a catalytic residue. Substrate is bound at residue Asp-203. Glu-264 is a catalytic residue.

The protein belongs to the glucose-6-phosphate 1-epimerase family.

It carries out the reaction alpha-D-glucose 6-phosphate = beta-D-glucose 6-phosphate. Catalyzes the interconversion between the alpha and beta anomers from at least three hexose 6-phosphate sugars (Glc6P, Gal6P, and Man6P). This Saccharomyces cerevisiae (strain ATCC 204508 / S288c) (Baker's yeast) protein is Glucose-6-phosphate 1-epimerase.